We begin with the raw amino-acid sequence, 513 residues long: Na(+)/H(+) antiporter NhaB (513 aa).

The next 12 helical transmembrane spans lie at leucine 23 to alanine 43, isoleucine 52 to isoleucine 72, leucine 97 to phenylalanine 117, leucine 120 to phenylalanine 140, phenylalanine 144 to isoleucine 164, leucine 202 to proline 222, phenylalanine 238 to leucine 258, alanine 303 to isoleucine 323, threonine 348 to isoleucine 368, leucine 391 to isoleucine 411, alanine 447 to isoleucine 467, and valine 475 to phenylalanine 495.

This sequence belongs to the NhaB Na(+)/H(+) (TC 2.A.34) antiporter family.

The protein resides in the cell inner membrane. It catalyses the reaction 2 Na(+)(in) + 3 H(+)(out) = 2 Na(+)(out) + 3 H(+)(in). Its function is as follows. Na(+)/H(+) antiporter that extrudes sodium in exchange for external protons. This is Na(+)/H(+) antiporter NhaB from Escherichia coli O6:H1 (strain CFT073 / ATCC 700928 / UPEC).